The primary structure comprises 860 residues: Pentatricopeptide repeat-containing protein At2g40720 (860 aa).

PPR repeat units lie at residues 59-93 (SVFT…GWRY), 94-124 (DPFI…WSQS), 132-166 (DVTV…GVRP), 167-203 (DAFS…SLDT), 204-234 (DSFL…IEDK), 236-270 (NVVL…SVKL), 271-305 (VSTS…GLHN), 306-340 (DPYV…RLEI), 341-371 (WNAM…SVLP), 372-406 (DSFT…PIQS), 407-437 (TSTI…MEEK), 438-472 (DMVA…DDSL), 475-509 (DSDI…GLVL), 510-540 (NVFV…MSTE), 541-575 (NMVA…GIFP), 576-610 (DSVS…GIPS), 611-641 (DTHL…MQHK), 642-676 (SLIT…GESP), 677-707 (DDVT…MKQD), and 713-743 (NMEH…MPIE). A type E motif region spans residues 748–823 (IWLCLLSASR…QPGCSWIEVS (76 aa)). Residues 824–854 (DRTNVFFSGGSSSPMKAEIFNVLNRLKSNMV) form a type E(+) motif region.

This sequence belongs to the PPR family. PCMP-E subfamily.

This is Pentatricopeptide repeat-containing protein At2g40720 (PCMP-E26) from Arabidopsis thaliana (Mouse-ear cress).